A 278-amino-acid polypeptide reads, in one-letter code: Polyamine aminopropyltransferase (278 aa).

Residues 3-240 form the PABS domain; the sequence is EGWFTEAVED…GWWSATLMVN (238 aa). Q33 serves as a coordination point for S-methyl-5'-thioadenosine. Spermidine contacts are provided by H64 and D88. Residues E108 and 139 to 140 contribute to the S-methyl-5'-thioadenosine site; that span reads DG. Residue D158 is the Proton acceptor of the active site. 158 to 161 is a spermidine binding site; that stretch reads DSTD. Residue P165 coordinates S-methyl-5'-thioadenosine.

The protein belongs to the spermidine/spermine synthase family. Homodimer or homotetramer.

It localises to the cytoplasm. The catalysed reaction is S-adenosyl 3-(methylsulfanyl)propylamine + putrescine = S-methyl-5'-thioadenosine + spermidine + H(+). It functions in the pathway amine and polyamine biosynthesis; spermidine biosynthesis; spermidine from putrescine: step 1/1. In terms of biological role, catalyzes the irreversible transfer of a propylamine group from the amino donor S-adenosylmethioninamine (decarboxy-AdoMet) to putrescine (1,4-diaminobutane) to yield spermidine. The sequence is that of Polyamine aminopropyltransferase from Halorhodospira halophila (strain DSM 244 / SL1) (Ectothiorhodospira halophila (strain DSM 244 / SL1)).